We begin with the raw amino-acid sequence, 125 residues long: Cu-Zn superoxide dismutase-like protein (125 aa).

A disulfide bridge links C52 with C102.

Belongs to the Cu-Zn superoxide dismutase family.

It localises to the host cytoplasm. Virion protein with no enzymatic activity. This Camelpox virus (strain M-96) protein is Cu-Zn superoxide dismutase-like protein.